A 1043-amino-acid chain; its full sequence is Isoleucine--tRNA ligase (1043 aa).

Residues 49–59 (PFATGLPHYGH) carry the 'HIGH' region motif. The 'KMSKS' region motif lies at 592 to 596 (KMSKR). K595 is a binding site for ATP.

The protein belongs to the class-I aminoacyl-tRNA synthetase family. IleS type 2 subfamily. In terms of assembly, monomer. Zn(2+) serves as cofactor.

The protein localises to the cytoplasm. It carries out the reaction tRNA(Ile) + L-isoleucine + ATP = L-isoleucyl-tRNA(Ile) + AMP + diphosphate. In terms of biological role, catalyzes the attachment of isoleucine to tRNA(Ile). As IleRS can inadvertently accommodate and process structurally similar amino acids such as valine, to avoid such errors it has two additional distinct tRNA(Ile)-dependent editing activities. One activity is designated as 'pretransfer' editing and involves the hydrolysis of activated Val-AMP. The other activity is designated 'posttransfer' editing and involves deacylation of mischarged Val-tRNA(Ile). This Chlamydia caviae (strain ATCC VR-813 / DSM 19441 / 03DC25 / GPIC) (Chlamydophila caviae) protein is Isoleucine--tRNA ligase.